The sequence spans 181 residues: Trafficking protein particle complex subunit 3 homolog (181 aa).

Cys70 carries the S-palmitoyl cysteine lipid modification.

This sequence belongs to the TRAPP small subunits family. BET3 subfamily. Homodimer. Part of the multisubunit TRAPP (transport protein particle) complex.

It is found in the golgi apparatus. It localises to the cis-Golgi network. Its subcellular location is the endoplasmic reticulum. In terms of biological role, may play a role in vesicular transport from endoplasmic reticulum to Golgi. Required for the systemic spread of the RNAi response. This is Trafficking protein particle complex subunit 3 homolog from Caenorhabditis briggsae.